The chain runs to 580 residues: Protein O-linked-mannose beta-1,4-N-acetylglucosaminyltransferase 2 (580 aa).

The Cytoplasmic portion of the chain corresponds to 1-4 (MHLS). The chain crosses the membrane as a helical; Signal-anchor for type II membrane protein span at residues 5–25 (AVLNALLVSVLAAVLWKHVRL). The Lumenal segment spans residues 26 to 580 (REHAASLEEE…PFADVLVCST (555 aa)). 2 N-linked (GlcNAc...) asparagine glycosylation sites follow: Asn99 and Asn276. Residues 488-580 (ARCQASVQGA…PFADVLVCST (93 aa)) enclose the Fibronectin type-III domain.

The protein belongs to the glycosyltransferase 61 family.

Its subcellular location is the endoplasmic reticulum membrane. It catalyses the reaction 3-O-(alpha-D-mannosyl)-L-threonyl-[protein] + UDP-N-acetyl-alpha-D-glucosamine = 3-O-(N-acetyl-beta-D-glucosaminyl-(1-&gt;4)-alpha-D-mannosyl)-L-threonyl-[protein] + UDP + H(+). Its pathway is protein modification; protein glycosylation. O-linked mannose beta-1,4-N-acetylglucosaminyltransferase that transfers UDP-N-acetyl-D-glucosamine to the 4-position of the mannose to generate N-acetyl-D-glucosamine-beta-1,4-O-D-mannosylprotein. Involved in the biosynthesis of the phosphorylated O-mannosyl trisaccharide (N-acetylgalactosamine-beta-3-N-acetylglucosamine-beta-4-(phosphate-6-)mannose), a carbohydrate structure present in alpha-dystroglycan (DAG1), which is required for binding laminin G-like domain-containing extracellular proteins with high affinity. The sequence is that of Protein O-linked-mannose beta-1,4-N-acetylglucosaminyltransferase 2 (POMGNT2) from Bos taurus (Bovine).